A 183-amino-acid polypeptide reads, in one-letter code: Ribosome-recycling factor (183 aa).

This sequence belongs to the RRF family.

The protein resides in the cytoplasm. Its function is as follows. Responsible for the release of ribosomes from messenger RNA at the termination of protein biosynthesis. May increase the efficiency of translation by recycling ribosomes from one round of translation to another. This Acetivibrio thermocellus (strain ATCC 27405 / DSM 1237 / JCM 9322 / NBRC 103400 / NCIMB 10682 / NRRL B-4536 / VPI 7372) (Clostridium thermocellum) protein is Ribosome-recycling factor.